A 167-amino-acid chain; its full sequence is Leptin (167 aa).

The first 21 residues, 1 to 21 (MCWRPLCRFLWLWSYLSYVQA), serve as a signal peptide directing secretion. Cysteine 117 and cysteine 167 are joined by a disulfide.

This sequence belongs to the leptin family.

It localises to the secreted. Key player in the regulation of energy balance and body weight control. Once released into the circulation, has central and peripheral effects by binding LEPR, found in many tissues, which results in the activation of several major signaling pathways. In the hypothalamus, acts as an appetite-regulating factor that induces a decrease in food intake and an increase in energy consumption by inducing anorexinogenic factors and suppressing orexigenic neuropeptides, also regulates bone mass and secretion of hypothalamo-pituitary-adrenal hormones. In the periphery, increases basal metabolism, influences reproductive function, regulates pancreatic beta-cell function and insulin secretion, is pro-angiogenic for endothelial cell and affects innate and adaptive immunity. In the arcuate nucleus of the hypothalamus, activates by depolarization POMC neurons inducing FOS and SOCS3 expression to release anorexigenic peptides and inhibits by hyperpolarization NPY neurons inducing SOCS3 with a consequent reduction on release of orexigenic peptides. In addition to its known satiety inducing effect, has a modulatory role in nutrient absorption. In the intestine, reduces glucose absorption by enterocytes by activating PKC and leading to a sequential activation of p38, PI3K and ERK signaling pathways which exerts an inhibitory effect on glucose absorption. Acts as a growth factor on certain tissues, through the activation of different signaling pathways increases expression of genes involved in cell cycle regulation such as CCND1, via JAK2-STAT3 pathway, or VEGFA, via MAPK1/3 and PI3K-AKT1 pathways. May also play an apoptotic role via JAK2-STAT3 pathway and up-regulation of BIRC5 expression. Pro-angiogenic, has mitogenic activity on vascular endothelial cells and plays a role in matrix remodeling by regulating the expression of matrix metalloproteinases (MMPs) and tissue inhibitors of metalloproteinases (TIMPs). In innate immunity, modulates the activity and function of neutrophils by increasing chemotaxis and the secretion of oxygen radicals. Increases phagocytosis by macrophages and enhances secretion of pro-inflammatory mediators. Increases cytotoxic ability of NK cells. Plays a pro-inflammatory role, in synergy with IL1B, by inducing NOS2 which promotes the production of IL6, IL8 and Prostaglandin E2, through a signaling pathway that involves JAK2, PI3K, MAP2K1/MEK1 and MAPK14/p38. In adaptive immunity, promotes the switch of memory T-cells towards T helper-1 cell immune responses. Increases CD4(+)CD25(-) T-cell proliferation and reduces autophagy during TCR (T-cell receptor) stimulation, through MTOR signaling pathway activation and BCL2 up-regulation. This is Leptin (Lep) from Rattus norvegicus (Rat).